Here is a 445-residue protein sequence, read N- to C-terminus: 23S rRNA (uracil(1939)-C(5))-methyltransferase RlmD (445 aa).

The TRAM domain occupies 12–70 (SKQLSSKLSLKVTQLDHLGAGIAHHDGKIVFINGALPGETVSVQLTEQKKKFARAKLLK). [4Fe-4S] cluster contacts are provided by Cys-83, Cys-89, Cys-92, and Cys-171. 6 residues coordinate S-adenosyl-L-methionine: Gln-278, Phe-307, Asn-312, Glu-328, Asp-355, and Asp-375. The Nucleophile role is filled by Cys-401.

This sequence belongs to the class I-like SAM-binding methyltransferase superfamily. RNA M5U methyltransferase family. RlmD subfamily.

The enzyme catalyses uridine(1939) in 23S rRNA + S-adenosyl-L-methionine = 5-methyluridine(1939) in 23S rRNA + S-adenosyl-L-homocysteine + H(+). Functionally, catalyzes the formation of 5-methyl-uridine at position 1939 (m5U1939) in 23S rRNA. The sequence is that of 23S rRNA (uracil(1939)-C(5))-methyltransferase RlmD from Shewanella halifaxensis (strain HAW-EB4).